A 161-amino-acid chain; its full sequence is Lipoprotein signal peptidase (161 aa).

3 helical membrane passes run 6–26, 67–87, and 90–110; these read ILFL…KFYV, GLFF…YLIK, and VSDL…MGNL. Residues D121 and D139 contribute to the active site. The chain crosses the membrane as a helical span at residues 134 to 154; the sequence is AFNIADTAISIGVLFLVVDMI.

It belongs to the peptidase A8 family.

It is found in the cell inner membrane. The enzyme catalyses Release of signal peptides from bacterial membrane prolipoproteins. Hydrolyzes -Xaa-Yaa-Zaa-|-(S,diacylglyceryl)Cys-, in which Xaa is hydrophobic (preferably Leu), and Yaa (Ala or Ser) and Zaa (Gly or Ala) have small, neutral side chains.. It participates in protein modification; lipoprotein biosynthesis (signal peptide cleavage). Its function is as follows. This protein specifically catalyzes the removal of signal peptides from prolipoproteins. The polypeptide is Lipoprotein signal peptidase (Syntrophus aciditrophicus (strain SB)).